We begin with the raw amino-acid sequence, 348 residues long: Centromere protein L (348 aa).

This sequence belongs to the CENP-L/IML3 family.

The protein resides in the nucleus. It localises to the chromosome. Its subcellular location is the centromere. Its function is as follows. Probable component of a centromeric complex involved in assembly of kinetochore proteins, mitotic progression and chromosome segregation. This chain is Centromere protein L (cenpl), found in Xenopus tropicalis (Western clawed frog).